The primary structure comprises 244 residues: rRNA adenine N-6-methyltransferase (244 aa).

The S-adenosyl-L-methionine site is built by Asn-11, Ile-13, Gly-38, Glu-59, Asp-84, and Asn-101.

Belongs to the class I-like SAM-binding methyltransferase superfamily. rRNA adenine N(6)-methyltransferase family.

The catalysed reaction is adenosine(2085) in 23S rRNA + 2 S-adenosyl-L-methionine = N(6)-dimethyladenosine(2085) in 23S rRNA + 2 S-adenosyl-L-homocysteine + 2 H(+). This protein produces a dimethylation of the adenine residue at position 2085 in 23S rRNA, resulting in reduced affinity between ribosomes and macrolide-lincosamide-streptogramin B antibiotics. In Staphylococcus epidermidis, this protein is rRNA adenine N-6-methyltransferase (ermM).